We begin with the raw amino-acid sequence, 276 residues long: NADPH-dependent 7-cyano-7-deazaguanine reductase (276 aa).

83–85 provides a ligand contact to substrate; that stretch reads IES. 85-86 provides a ligand contact to NADPH; sequence SK. Residue C184 is the Thioimide intermediate of the active site. The active-site Proton donor is the D191. 223–224 provides a ligand contact to substrate; that stretch reads HE. Residue 252–253 coordinates NADPH; sequence RG.

This sequence belongs to the GTP cyclohydrolase I family. QueF type 2 subfamily. Homodimer.

Its subcellular location is the cytoplasm. It catalyses the reaction 7-aminomethyl-7-carbaguanine + 2 NADP(+) = 7-cyano-7-deazaguanine + 2 NADPH + 3 H(+). It participates in tRNA modification; tRNA-queuosine biosynthesis. Its function is as follows. Catalyzes the NADPH-dependent reduction of 7-cyano-7-deazaguanine (preQ0) to 7-aminomethyl-7-deazaguanine (preQ1). This chain is NADPH-dependent 7-cyano-7-deazaguanine reductase, found in Pseudomonas fluorescens (strain SBW25).